Here is a 235-residue protein sequence, read N- to C-terminus: MSNQLIYTGKAKDIYSTEDENVIKSVYKDQATMLNGARKETIKGKGVLNNQISSLIFEKLNASGVATHFIERISDTEQLNKKVTIIPLEVVLRNVTAGSFSKRFGVEEGLDLKTPIVEFYYKNDDLDDPFINDEHVKFLNIANDEQIAYIKDETRRINELLKDWFEQIGLRLIDFKLEFGFDKDGKIILADEFSPDNCRLWDAEGHHMDKDVFRRDLGSLTDVYEVVLEKLQGLK.

The protein belongs to the SAICAR synthetase family.

The catalysed reaction is 5-amino-1-(5-phospho-D-ribosyl)imidazole-4-carboxylate + L-aspartate + ATP = (2S)-2-[5-amino-1-(5-phospho-beta-D-ribosyl)imidazole-4-carboxamido]succinate + ADP + phosphate + 2 H(+). Its pathway is purine metabolism; IMP biosynthesis via de novo pathway; 5-amino-1-(5-phospho-D-ribosyl)imidazole-4-carboxamide from 5-amino-1-(5-phospho-D-ribosyl)imidazole-4-carboxylate: step 1/2. The chain is Phosphoribosylaminoimidazole-succinocarboxamide synthase from Streptococcus thermophilus (strain ATCC BAA-491 / LMD-9).